The following is a 166-amino-acid chain: Phosphopantetheine adenylyltransferase (166 aa).

Residue S11 coordinates substrate. Residues 11 to 12 (SF) and H19 contribute to the ATP site. The substrate site is built by K43, A76, and R90. Residues 91–93 (GLR), E101, and 126–132 (LQPISSS) each bind ATP.

The protein belongs to the bacterial CoaD family. In terms of assembly, homohexamer. It depends on Mg(2+) as a cofactor.

Its subcellular location is the cytoplasm. The enzyme catalyses (R)-4'-phosphopantetheine + ATP + H(+) = 3'-dephospho-CoA + diphosphate. It functions in the pathway cofactor biosynthesis; coenzyme A biosynthesis; CoA from (R)-pantothenate: step 4/5. Its function is as follows. Reversibly transfers an adenylyl group from ATP to 4'-phosphopantetheine, yielding dephospho-CoA (dPCoA) and pyrophosphate. This chain is Phosphopantetheine adenylyltransferase, found in Streptococcus equi subsp. zooepidemicus (strain H70).